Reading from the N-terminus, the 278-residue chain is Thiazole synthase (278 aa).

The active-site Schiff-base intermediate with DXP is Lys-109. 1-deoxy-D-xylulose 5-phosphate is bound by residues Gly-170, Ala-197–Gly-198, and Asn-219–Thr-220.

The protein belongs to the ThiG family. In terms of assembly, homotetramer. Forms heterodimers with either ThiH or ThiS.

It localises to the cytoplasm. The enzyme catalyses [ThiS sulfur-carrier protein]-C-terminal-Gly-aminoethanethioate + 2-iminoacetate + 1-deoxy-D-xylulose 5-phosphate = [ThiS sulfur-carrier protein]-C-terminal Gly-Gly + 2-[(2R,5Z)-2-carboxy-4-methylthiazol-5(2H)-ylidene]ethyl phosphate + 2 H2O + H(+). It participates in cofactor biosynthesis; thiamine diphosphate biosynthesis. Functionally, catalyzes the rearrangement of 1-deoxy-D-xylulose 5-phosphate (DXP) to produce the thiazole phosphate moiety of thiamine. Sulfur is provided by the thiocarboxylate moiety of the carrier protein ThiS. In vitro, sulfur can be provided by H(2)S. This chain is Thiazole synthase, found in Cupriavidus taiwanensis (strain DSM 17343 / BCRC 17206 / CCUG 44338 / CIP 107171 / LMG 19424 / R1) (Ralstonia taiwanensis (strain LMG 19424)).